Reading from the N-terminus, the 222-residue chain is Glutathione S-transferase (222 aa).

The 81-residue stretch at G3–G83 folds into the GST N-terminal domain. Glutathione contacts are provided by residues Y9, R45, Q54–V55, and Q67–S68. The GST C-terminal domain occupies D85–L208.

Belongs to the GST superfamily. Alpha family. Homodimer.

It localises to the cytoplasm. The catalysed reaction is RX + glutathione = an S-substituted glutathione + a halide anion + H(+). Its function is as follows. Conjugation of reduced glutathione to a wide number of exogenous and endogenous hydrophobic electrophiles. This Gallus gallus (Chicken) protein is Glutathione S-transferase.